Reading from the N-terminus, the 57-residue chain is uncharacterized protein (57 aa).

Its subcellular location is the plastid. This is an uncharacterized protein from Euglena longa (Euglenophycean alga).